A 529-amino-acid polypeptide reads, in one-letter code: Arginine--tRNA ligase (529 aa).

A 'HIGH' region motif is present at residues Ala113–His123.

It belongs to the class-I aminoacyl-tRNA synthetase family. Monomer.

It localises to the cytoplasm. It carries out the reaction tRNA(Arg) + L-arginine + ATP = L-arginyl-tRNA(Arg) + AMP + diphosphate. The protein is Arginine--tRNA ligase of Campylobacter curvus (strain 525.92).